The following is a 63-amino-acid chain: GQESCGPNEVWTECTGCEMKCGPDENTPCPLMCRRPSCECSPGRGMRRTNDGKCIPASQCPEH.

5 disulfides stabilise this stretch: Cys5–Cys38, Cys14–Cys33, Cys17–Cys29, Cys21–Cys60, and Cys40–Cys54. Positions 5–60 constitute a TIL domain; the sequence is CGPNEVWTECTGCEMKCGPDENTPCPLMCRRPSCECSPGRGMRRTNDGKCIPASQC.

The protein belongs to the serine protease inhibitor-like (TIL domain-containing) family.

Its subcellular location is the secreted. Defends the organism against the host's proteinases. This is Chymotrypsin/elastase isoinhibitor 1 from Ascaris suum (Pig roundworm).